The primary structure comprises 555 residues: Phosphoglucomutase (555 aa).

Residues arginine 22 and serine 114 each contribute to the alpha-D-glucose 1,6-bisphosphate site. Serine 114 serves as the catalytic Phosphoserine intermediate. Residues serine 114, aspartate 279, aspartate 281, and aspartate 283 each coordinate Mg(2+). Serine 114 is modified (phosphoserine). Residues aspartate 283, arginine 284, threonine 347, glutamate 366, serine 368, and lysine 379 each coordinate alpha-D-glucose 1,6-bisphosphate.

Belongs to the phosphohexose mutase family. As to quaternary structure, monomer. Mg(2+) is required as a cofactor.

Its subcellular location is the cytoplasm. It carries out the reaction alpha-D-glucose 1-phosphate = alpha-D-glucose 6-phosphate. It catalyses the reaction O-phospho-L-seryl-[protein] + alpha-D-glucose 1-phosphate = alpha-D-glucose 1,6-bisphosphate + L-seryl-[protein]. The enzyme catalyses alpha-D-glucose 1,6-bisphosphate + L-seryl-[protein] = O-phospho-L-seryl-[protein] + alpha-D-glucose 6-phosphate. In terms of biological role, catalyzes the reversible isomerization of alpha-D-glucose 1-phosphate to alpha-D-glucose 6-phosphate. The mechanism proceeds via the intermediate compound alpha-D-glucose 1,6-bisphosphate. Key enzyme in hexose metabolism. The reverse reaction is an essential step for biosynthesis because glucose 1-phosphate is the starting point for the synthesis of UDP-glucose, which acts as a precursor for the synthesis of oligosaccharides and trehalose. This is Phosphoglucomutase (pgmA) from Aspergillus fumigatus (strain ATCC MYA-4609 / CBS 101355 / FGSC A1100 / Af293) (Neosartorya fumigata).